The primary structure comprises 1011 residues: Vacuolar membrane protease (1011 aa).

The Cytoplasmic segment spans residues Met1–Ser9. A helical membrane pass occupies residues Ala10 to Ile30. Over Asn31–Met378 the chain is Vacuolar. 2 N-linked (GlcNAc...) asparagine glycosylation sites follow: Asn50 and Asn106. Zn(2+) is bound by residues His159 and Asp171. The active-site Proton acceptor is the Glu205. The Zn(2+) site is built by Glu206, Glu231, and His304. Asn331 carries N-linked (GlcNAc...) asparagine glycosylation. A helical transmembrane segment spans residues Phe379–Leu399. Over Val400–Gly439 the chain is Cytoplasmic. A helical transmembrane segment spans residues Phe440–Leu460. At Leu461–Ser471 the chain is on the vacuolar side. The chain crosses the membrane as a helical span at residues Ser472–Met492. Topologically, residues Arg493–Arg505 are cytoplasmic. Residues Leu506 to Leu526 form a helical membrane-spanning segment. Topologically, residues Glu527–Tyr536 are vacuolar. The helical transmembrane segment at Ile537–Phe557 threads the bilayer. Residues Ser558–Trp682 lie on the Cytoplasmic side of the membrane. The span at Glu595–Pro609 shows a compositional bias: polar residues. 2 disordered regions span residues Glu595–Lys627 and Ile650–Gln671. A compositionally biased stretch (acidic residues) spans Gln610–Thr622. Residues Ile683–Leu703 traverse the membrane as a helical segment. Residues Leu704–Leu719 are Vacuolar-facing. Residue Asn709 is glycosylated (N-linked (GlcNAc...) asparagine). The chain crosses the membrane as a helical span at residues Ala720–Ile740. Residues His741–Val747 are Cytoplasmic-facing. Residues Pro748–Phe768 form a helical membrane-spanning segment. The Vacuolar portion of the chain corresponds to Ser769–Val1011. Asn872 carries an N-linked (GlcNAc...) asparagine glycan.

It belongs to the peptidase M28 family. Requires Zn(2+) as cofactor.

Its subcellular location is the vacuole membrane. Functionally, may be involved in vacuolar sorting and osmoregulation. In Pyricularia oryzae (strain 70-15 / ATCC MYA-4617 / FGSC 8958) (Rice blast fungus), this protein is Vacuolar membrane protease.